The following is a 754-amino-acid chain: 1,4-alpha-glucan branching enzyme GlgB (754 aa).

Asp431 acts as the Nucleophile in catalysis. The active-site Proton donor is the Glu484.

Belongs to the glycosyl hydrolase 13 family. GlgB subfamily. Monomer.

The catalysed reaction is Transfers a segment of a (1-&gt;4)-alpha-D-glucan chain to a primary hydroxy group in a similar glucan chain.. It participates in glycan biosynthesis; glycogen biosynthesis. In terms of biological role, catalyzes the formation of the alpha-1,6-glucosidic linkages in glycogen by scission of a 1,4-alpha-linked oligosaccharide from growing alpha-1,4-glucan chains and the subsequent attachment of the oligosaccharide to the alpha-1,6 position. The protein is 1,4-alpha-glucan branching enzyme GlgB of Prochlorococcus marinus (strain MIT 9301).